A 78-amino-acid chain; its full sequence is Toxin-like protein 10 (78 aa).

The N-terminal stretch at 1-23 (MKATALLIAVFILFSVFGDMGYC) is a signal peptide.

In terms of processing, contains 4 disulfide bonds. As to expression, expressed by the venom gland.

Its subcellular location is the secreted. The protein is Toxin-like protein 10 of Urodacus yaschenkoi (Inland robust scorpion).